A 375-amino-acid polypeptide reads, in one-letter code: Succinyl-diaminopimelate desuccinylase (375 aa).

His-66 contributes to the Zn(2+) binding site. Residue Asp-68 is part of the active site. Zn(2+) is bound at residue Asp-99. The Proton acceptor role is filled by Glu-133. Zn(2+)-binding residues include Glu-134, Glu-162, and His-348.

Belongs to the peptidase M20A family. DapE subfamily. In terms of assembly, homodimer. It depends on Zn(2+) as a cofactor. Co(2+) serves as cofactor.

The catalysed reaction is N-succinyl-(2S,6S)-2,6-diaminopimelate + H2O = (2S,6S)-2,6-diaminopimelate + succinate. Its pathway is amino-acid biosynthesis; L-lysine biosynthesis via DAP pathway; LL-2,6-diaminopimelate from (S)-tetrahydrodipicolinate (succinylase route): step 3/3. In terms of biological role, catalyzes the hydrolysis of N-succinyl-L,L-diaminopimelic acid (SDAP), forming succinate and LL-2,6-diaminopimelate (DAP), an intermediate involved in the bacterial biosynthesis of lysine and meso-diaminopimelic acid, an essential component of bacterial cell walls. This chain is Succinyl-diaminopimelate desuccinylase, found in Salmonella dublin (strain CT_02021853).